A 411-amino-acid chain; its full sequence is Lissencephaly-1 homolog (411 aa).

A LisH domain is found at 9 to 41; the sequence is QREELNQAIADYLGSNGYADSLEAFRKEADLST. The stretch at 56–83 forms a coiled coil; sequence TSVIRLQKKVMELEAKLTEAEKEVIEGA. WD repeat units follow at residues 106 to 147, 148 to 187, 191 to 230, 233 to 272, 275 to 334, 337 to 376, and 379 to 411; these read GHRA…RSLK, GHTD…ECVK, GHDH…CVKT, GHRE…CKVE, DHEH…CLFT, GHDN…CMKT, and AHQH…WECR.

Belongs to the WD repeat LIS1/nudF family.

It is found in the cytoplasm. Its subcellular location is the cytoskeleton. It localises to the microtubule organizing center. The protein localises to the centrosome. Positively regulates the activity of the minus-end directed microtubule motor protein dynein. May enhance dynein-mediated microtubule sliding by targeting dynein to the microtubule plus end. Required for several dynein- and microtubule-dependent processes. The polypeptide is Lissencephaly-1 homolog (Drosophila ananassae (Fruit fly)).